The chain runs to 473 residues: Cysteine--tRNA ligase (473 aa).

C33 contributes to the Zn(2+) binding site. The 'HIGH' region motif lies at 35-45; it reads ATVQGQPHIGH. 3 residues coordinate Zn(2+): C211, H236, and E240. The 'KMSKS' region motif lies at 267–271; the sequence is KMSKS. K270 contributes to the ATP binding site.

This sequence belongs to the class-I aminoacyl-tRNA synthetase family. In terms of assembly, monomer. Zn(2+) is required as a cofactor.

Its subcellular location is the cytoplasm. It carries out the reaction tRNA(Cys) + L-cysteine + ATP = L-cysteinyl-tRNA(Cys) + AMP + diphosphate. In Mycobacterium leprae (strain Br4923), this protein is Cysteine--tRNA ligase.